A 139-amino-acid polypeptide reads, in one-letter code: D-ribose pyranase (139 aa).

The active-site Proton donor is His-20. Residues Asp-28, His-106, and 128-130 contribute to the substrate site; that span reads YAN.

The protein belongs to the RbsD / FucU family. RbsD subfamily. In terms of assembly, homodecamer.

It is found in the cytoplasm. It carries out the reaction beta-D-ribopyranose = beta-D-ribofuranose. It functions in the pathway carbohydrate metabolism; D-ribose degradation; D-ribose 5-phosphate from beta-D-ribopyranose: step 1/2. Functionally, catalyzes the interconversion of beta-pyran and beta-furan forms of D-ribose. This is D-ribose pyranase from Salmonella paratyphi B (strain ATCC BAA-1250 / SPB7).